A 109-amino-acid polypeptide reads, in one-letter code: Large ribosomal subunit protein uL22 (109 aa).

The protein belongs to the universal ribosomal protein uL22 family. In terms of assembly, part of the 50S ribosomal subunit.

Functionally, this protein binds specifically to 23S rRNA; its binding is stimulated by other ribosomal proteins, e.g. L4, L17, and L20. It is important during the early stages of 50S assembly. It makes multiple contacts with different domains of the 23S rRNA in the assembled 50S subunit and ribosome. Its function is as follows. The globular domain of the protein is located near the polypeptide exit tunnel on the outside of the subunit, while an extended beta-hairpin is found that lines the wall of the exit tunnel in the center of the 70S ribosome. This is Large ribosomal subunit protein uL22 from Aromatoleum aromaticum (strain DSM 19018 / LMG 30748 / EbN1) (Azoarcus sp. (strain EbN1)).